Reading from the N-terminus, the 317-residue chain is Protease HtpX homolog (317 aa).

The next 2 helical transmembrane spans lie at 6-26 (TAIL…AIGG) and 28-48 (GGMM…YWNS). H130 is a binding site for Zn(2+). E131 is an active-site residue. H134 is a Zn(2+) binding site. Transmembrane regions (helical) follow at residues 145-165 (MTAT…LFGG) and 173-193 (PFGA…AMLV). E202 is a Zn(2+) binding site. The disordered stretch occupies residues 283–317 (GGGGFAPGPAPAVRPPGGNPWGVDPGGGQRRGPWG). The span at 290–300 (GPAPAVRPPGG) shows a compositional bias: pro residues. Gly residues predominate over residues 306–317 (DPGGGQRRGPWG).

Belongs to the peptidase M48B family. Zn(2+) serves as cofactor.

Its subcellular location is the cell inner membrane. This Xanthobacter autotrophicus (strain ATCC BAA-1158 / Py2) protein is Protease HtpX homolog.